We begin with the raw amino-acid sequence, 137 residues long: F420H(2)-dependent biliverdin reductase (137 aa).

Residues 36–41 (HVVAVG), 54–55 (IT), 60–61 (QK), Arg67, and 78–81 (GARW) contribute to the coenzyme F420-(gamma-Glu)n site.

The protein belongs to the F420H(2)-dependent biliverdin reductase family. Homodimer.

The protein resides in the cell surface. Its subcellular location is the secreted. It catalyses the reaction (4Z,15Z)-bilirubin IXalpha + oxidized coenzyme F420-(gamma-L-Glu)(n) + H(+) = biliverdin IXalpha + reduced coenzyme F420-(gamma-L-Glu)(n). Its function is as follows. Catalyzes the F420H(2)-dependent reduction of biliverdin-IXalpha at C10 position, leading to bilirubin-IXalpha, a potent antioxidant. As biliverdin-IXalpha is produced in high amounts in macrophages infected with M.tuberculosis, its reduction by Rv2074 may play a role in protecting mycobacteria against oxidative stress, aiding the persistence of M.tuberculosis infection. This chain is F420H(2)-dependent biliverdin reductase, found in Mycobacterium tuberculosis (strain CDC 1551 / Oshkosh).